Consider the following 161-residue polypeptide: Nucleoside diphosphate kinase (161 aa).

The ATP site is built by Lys-12, Phe-60, Arg-88, Thr-94, and Arg-105. His-121 functions as the Pros-phosphohistidine intermediate in the catalytic mechanism.

It belongs to the NDK family. Mg(2+) is required as a cofactor.

It localises to the cytoplasm. The enzyme catalyses a 2'-deoxyribonucleoside 5'-diphosphate + ATP = a 2'-deoxyribonucleoside 5'-triphosphate + ADP. It carries out the reaction a ribonucleoside 5'-diphosphate + ATP = a ribonucleoside 5'-triphosphate + ADP. Functionally, major role in the synthesis of nucleoside triphosphates other than ATP. The ATP gamma phosphate is transferred to the NDP beta phosphate via a ping-pong mechanism, using a phosphorylated active-site intermediate. The protein is Nucleoside diphosphate kinase of Pyrococcus furiosus (strain ATCC 43587 / DSM 3638 / JCM 8422 / Vc1).